The chain runs to 4471 residues: Dynein axonemal heavy chain 10 (4471 aa).

The stem stretch occupies residues 1-1793 (MVPEEVEVEI…NIRQCTGTFG (1793 aa)). A disordered region spans residues 46–65 (TESLGQPLNREDEEMDKEIS). Coiled-coil stretches lie at residues 203-223 (NVQK…GEIK), 602-622 (QEVK…EDRK), 1071-1106 (KLLN…EDLK), and 1217-1245 (VELL…KLFD). N1074 is a glycosylation site (N-linked (GlcNAc...) asparagine). The stretch at 1221 to 1254 (GVYERELARHEKSRQELANAEKLFDLPITMYPEL) is one TPR 1 repeat. AAA regions lie at residues 1794 to 2015 (YGYE…VLVM), 2075 to 2294 (DAVE…VIVE), 2417 to 2665 (IHAP…VFNG), and 2765 to 3014 (EYNE…LRRS). The GPAGTGKT motif motif lies at 1832–1839 (GPAGTGKT). 1832–1839 (GPAGTGKT) serves as a coordination point for ATP. A CFDEFNR motif motif is present at residues 1882–1888 (CFDEFNR). ATP is bound by residues 2113–2120 (GPTRGGKS) and 2455–2462 (GESGTSKT). TPR repeat units follow at residues 2736–2769 (MALH…YNES) and 2771–2797 (TKMN…MDRG). Residues 2747–2770 (EDIQDYEAAKALFQEILEEYNESN) adopt a coiled-coil conformation. 2803–2810 (GVGGSGKQ) serves as a coordination point for ATP. A stalk region spans residues 3029–3313 (YSKLLDEKTQ…QKLQEEAEIM (285 aa)). Coiled coils occupy residues 3045–3131 (KRLD…LAEV), 3257–3327 (KREK…ISGL), and 3567–3638 (ERRE…EKTA). An AAA 5 region spans residues 3399 to 3629 (LTDDVEISRW…TKSKATEVSE (231 aa)). The TPR 4 repeat unit spans residues 3802–3837 (WQEWYDLDSLEQFPVPLGYDNNITPFQKLLILRCFR). Positions 3845 to 4062 (VTDYVTVTMG…FQVCMEILNT (218 aa)) are AAA 6. The stretch at 4074 to 4108 (RIPWGSLKYLIGEVMYGGRAIDSFDRRILTIYMDE) is one TPR 5 repeat. The stretch at 4235–4260 (LLQELERFNKLVVRMTKSLAELQRAL) forms a coiled coil.

Belongs to the dynein heavy chain family. In terms of assembly, consists of at least two heavy chains and a number of intermediate and light chains. As to expression, expressed primarily in trachea and testis, 2 tissues containing axonemal structures. Also expressed in brain but not in adult heart.

The protein resides in the cytoplasm. It localises to the cytoskeleton. It is found in the cilium axoneme. Force generating protein of respiratory cilia. Produces force towards the minus ends of microtubules. Dynein has ATPase activity; the force-producing power stroke is thought to occur on release of ADP. Involved in sperm motility; implicated in sperm flagellar assembly. Probable inner arm dynein heavy chain. The protein is Dynein axonemal heavy chain 10 (DNAH10) of Homo sapiens (Human).